The following is an 88-amino-acid chain: Small ribosomal subunit protein bS20 (88 aa).

This sequence belongs to the bacterial ribosomal protein bS20 family.

Functionally, binds directly to 16S ribosomal RNA. This chain is Small ribosomal subunit protein bS20, found in Methylocella silvestris (strain DSM 15510 / CIP 108128 / LMG 27833 / NCIMB 13906 / BL2).